The primary structure comprises 148 residues: Transthyretin-like protein 2 (148 aa).

A signal peptide spans 1 to 17; the sequence is MSKYAILGLVLVGTVAS. N-linked (GlcNAc...) asparagine glycosylation occurs at asparagine 77.

It belongs to the nematode transthyretin-like family.

It localises to the secreted. In Caenorhabditis elegans, this protein is Transthyretin-like protein 2 (ttr-2).